A 442-amino-acid polypeptide reads, in one-letter code: Na(+)/H(+) antiporter NhaA (442 aa).

Helical transmembrane passes span 32-52, 73-93, 111-131, 139-159, 170-190, 193-213, 234-254, 284-304, 316-336, 352-372, and 383-403; these read IGGG…NSPW, LTLA…VAGL, AVPV…YALV, AGWA…LAVI, FLLT…AVVY, HLSI…TLLV, VHAS…AVPV, VAVP…LSGL, VVLG…FLVA, VLGL…IGEL, and HVKI…AVVL. Over residues 423-435 the composition is skewed to basic and acidic residues; the sequence is HDGIPDVYQDLHR. The interval 423–442 is disordered; sequence HDGIPDVYQDLHRSSPRPWG.

The protein belongs to the NhaA Na(+)/H(+) (TC 2.A.33) antiporter family.

The protein resides in the cell membrane. It catalyses the reaction Na(+)(in) + 2 H(+)(out) = Na(+)(out) + 2 H(+)(in). Na(+)/H(+) antiporter that extrudes sodium in exchange for external protons. This Frankia casuarinae (strain DSM 45818 / CECT 9043 / HFP020203 / CcI3) protein is Na(+)/H(+) antiporter NhaA.